The chain runs to 673 residues: MACLLETPIRMSVLSEVTASSRHYVDRLFDPDPQKVLQGVIDMKNAVIGNNKQKANLIVLGAVPRLLYLLQQETSSTELKTECAVVLGSLAMGTENNVKSLLDCHIIPALLQGLLSPDLKFIEACLRCPRTIFTSPVTPEELLYTDATVIPHLMALLSRSRYTQEYICQIFSHCCKGPDHQTILFNHGAVQNIAHLLTSLSYKVRMQALKCFSVLAFENPQVSMTLVNVLVDGELLPQIFVKMLQRDKPIEMQLTSAKCLTYMCRAGAIRTDDNCIVLKTLPCLVRMCSKERLLEERVEGAETLAYLIEPDVELQRIASITDHLIAMLADYFKYPSSVSAITDIKRLDHDLKHAHELRQAAFKLYASLGANDEDIRKKIIETENMMDRIVTGLSESSVKVRLAAVRCLHSLSRSVQQLRTSFQDHAVWKPLMKVLQNAPDEILVVASSMLCNLLLEFSPSKEPILESGAVELLCGLTQSENPALRVNGIWALMNTAFQAEQKIKADILRSLSTEQLFRLLSDSDLNVLMKTLGLLRNLLSTRPHIDKIMSTHGKQIMQAVTLILEGEHNIEVKEQTLCILANIADGTTAKDLIMTNDDILQKIKYYMGHSHVKLQLAAMFCISNLIWNEEEGSQERQDKLRDMGIVDILHKLSQSPDSNLCDKAKMALQQYLA.

At Ala-2 the chain carries N-acetylalanine. ARM repeat units follow at residues 51-92, 95-134, 138-176, 178-217, 224-265, 269-309, 313-352, 374-413, 416-455, 458-497, 501-540, 543-585, 588-627, and 634-673; these read NKQK…SLAM, ENNV…TIFT, TPEE…HCCK, PDHQ…VLAF, MTLV…YMCR, IRTD…YLIE, ELQR…HDLK, DIRK…SLSR, QQLR…NLLL, SPSK…NTAF, QKIK…NLLS, PHID…NIAD, TAKD…NLIW, and QERQ…QYLA. Ser-337 carries the post-translational modification Phosphoserine. Residue Ser-512 is modified to Phosphoserine.

Identified in the CTLH complex that contains GID4, RANBP9 and/or RANBP10, MKLN1, MAEA, RMND5A (or alternatively its paralog RMND5B), GID8, ARMC8, WDR26 and YPEL5. Within this complex, MAEA, RMND5A (or alternatively its paralog RMND5B), GID8, WDR26, and RANBP9 and/or RANBP10 form the catalytic core, while GID4, MKLN1, ARMC8 and YPEL5 have ancillary roles.

It is found in the nucleus. Its subcellular location is the cytoplasm. Component of the CTLH E3 ubiquitin-protein ligase complex that selectively accepts ubiquitin from UBE2H and mediates ubiquitination and subsequent proteasomal degradation of the transcription factor HBP1. In Pongo abelii (Sumatran orangutan), this protein is Armadillo repeat-containing protein 8 (ARMC8).